The following is a 301-amino-acid chain: HTH-type transcriptional regulator AbaB (301 aa).

Residues 1-58 (MDLALLRTFVTVHRAGSFTRAAALLGLSQPAVTSQIRTLERQLGRPLFLRQARGVTPT) enclose the HTH lysR-type domain. The H-T-H motif DNA-binding region spans 18–37 (FTRAAALLGLSQPAVTSQIR).

The protein belongs to the LysR transcriptional regulatory family.

Putative regulator that may be involved in stimulating antibiotic production in S.antibioticus. This Streptomyces antibioticus protein is HTH-type transcriptional regulator AbaB.